The following is a 157-amino-acid chain: SsrA-binding protein (157 aa).

A disordered region spans residues 130 to 157 (KAEHDKRDTIKEREGKREVERVMKSRHR).

The protein belongs to the SmpB family.

It is found in the cytoplasm. Its function is as follows. Required for rescue of stalled ribosomes mediated by trans-translation. Binds to transfer-messenger RNA (tmRNA), required for stable association of tmRNA with ribosomes. tmRNA and SmpB together mimic tRNA shape, replacing the anticodon stem-loop with SmpB. tmRNA is encoded by the ssrA gene; the 2 termini fold to resemble tRNA(Ala) and it encodes a 'tag peptide', a short internal open reading frame. During trans-translation Ala-aminoacylated tmRNA acts like a tRNA, entering the A-site of stalled ribosomes, displacing the stalled mRNA. The ribosome then switches to translate the ORF on the tmRNA; the nascent peptide is terminated with the 'tag peptide' encoded by the tmRNA and targeted for degradation. The ribosome is freed to recommence translation, which seems to be the essential function of trans-translation. In Acidovorax sp. (strain JS42), this protein is SsrA-binding protein.